Consider the following 1048-residue polypeptide: Ankyrin repeat domain-containing protein 27 (1048 aa).

Residues 1–372 (MALYDEDLLK…RQGSLSTKTP (372 aa)) form a sufficient for GEF activity towards RAB21 region. A VPS9 domain is found at 233–371 (ASEDAAFNKI…IRQGSLSTKT (139 aa)). ANK repeat units lie at residues 396–426 (TPID…DKDA), 462–491 (RGQT…VVNA), 495–524 (HGST…STEV), 528–557 (NGNT…QACR), 564–593 (KGDT…PTAV), and 597–627 (LKET…RPRP). Residues 396–460 (TPIDCLFKHI…PSVVTPFSRD (65 aa)) form a sufficient for interaction with VPS29 region. An interaction with RAB38 region spans residues 451–600 (PSVVTPFSRD…TAVQNRLKET (150 aa)). The interaction with RAB32 stretch occupies residues 451 to 729 (PSVVTPFSRD…CAPAQKLARI (279 aa)). Basic and acidic residues predominate over residues 618–627 (HLSSDRRPRP). The interval 618 to 650 (HLSSDRRPRPSEVPAQSPTRSVDSISQGSSTSS) is disordered. Positions 638-650 (SVDSISQGSSTSS) are enriched in low complexity. A required for interaction with VAMP7 region spans residues 658–707 (FRQEEVKKDYREVEKLLRAVADGDLEMVRYLLEWTEDDLDDVEDAISTVD). ANK repeat units follow at residues 668 to 698 (REVE…DLDD), 742 to 771 (DGFS…YSGA), 775 to 804 (SQAV…KPNK), 808 to 837 (SGNT…SINA), and 841 to 870 (KGNT…SVDI). Positions 692-745 (TEDDLDDVEDAISTVDLEFCHPLCQCPKCAPAQKLARISANGLSVNVTNQDGFS) are sufficient for interaction with VPS29. Residues 949-962 (ERTSRETMGRDRSV) show a composition bias toward basic and acidic residues. The segment at 949 to 1019 (ERTSRETMGR…AAPGHRPMVR (71 aa)) is disordered. Phosphoserine is present on residues Ser-961 and Ser-969. Polar residues predominate over residues 979–995 (TGKQSDLSDLSRYQTSE). A compositionally biased stretch (basic and acidic residues) spans 996–1006 (EGNKGLPERPV). At Thr-1022 the chain carries Phosphothreonine.

Interacts with RAB21 (GDP-bound form), VPS29, KIF5A, KIF5C, GOLGA4. Interacts with RAB32 (GTP-bound form), RAB38 (GTP-bound form), VAMP7. Interacts with low affinity with RAB5. ANKRD27:RAB32 heterodimers can homodimerize to form tetramers. Can interact with RAB38 or RAB32, VPS29 and VAMP7 simultaneously. A decreased interaction with RAB32 seen in the presence of SGSM2.

It localises to the early endosome. The protein resides in the late endosome. The protein localises to the cytoplasmic vesicle membrane. It is found in the lysosome. Its subcellular location is the cell membrane. It localises to the melanosome. The protein resides in the cytoplasmic vesicle. Functionally, may be a guanine exchange factor (GEF) for Rab21, Rab32 and Rab38 and regulate endosome dynamics. May regulate the participation of VAMP7 in membrane fusion events; in vitro inhibits VAMP7-mediated SNARE complex formation by trapping VAMP7 in a closed, fusogenically inactive conformation. Involved in peripheral melanosomal distribution of TYRP1 in melanocytes; the function, which probably is implicating vesicle-trafficking, includes cooperation with Rab32, Rab38 and VAMP7. Involved in the regulation of neurite growth; the function seems to require its GEF activity, probably towards Rab21, and VAMP7 but not Rab32/38. Proposed to be involved in Golgi sorting of VAMP7 and transport of VAMP7 vesicles to the cell surface; the function seems to implicate kinesin heavy chain isoform 5 proteins, GOLGA4, RAB21 and MACF1. Required for the colocalization of VAMP7 and Rab21, probably on TGN sites. Involved in GLUT1 endosome-to-plasma membrane trafficking; the function is dependent of association with VPS29. Regulates the proper trafficking of melanogenic enzymes TYR, TYRP1 and DCT/TYRP2 to melanosomes in melanocytes. This Mus musculus (Mouse) protein is Ankyrin repeat domain-containing protein 27 (Ankrd27).